A 321-amino-acid chain; its full sequence is Ornithine carbamoyltransferase (321 aa).

Residues 53-56 (STRT), glutamine 80, arginine 104, and 131-134 (HPCQ) contribute to the carbamoyl phosphate site. Residues asparagine 166, aspartate 230, and 234–235 (SM) each bind L-ornithine. Carbamoyl phosphate is bound by residues 270–271 (CL) and arginine 298.

Belongs to the aspartate/ornithine carbamoyltransferase superfamily. OTCase family.

The protein localises to the cytoplasm. It carries out the reaction carbamoyl phosphate + L-ornithine = L-citrulline + phosphate + H(+). It participates in amino-acid degradation; L-arginine degradation via ADI pathway; carbamoyl phosphate from L-arginine: step 2/2. Its function is as follows. Reversibly catalyzes the transfer of the carbamoyl group from carbamoyl phosphate (CP) to the N(epsilon) atom of ornithine (ORN) to produce L-citrulline. This chain is Ornithine carbamoyltransferase, found in Bifidobacterium longum subsp. infantis (strain ATCC 15697 / DSM 20088 / JCM 1222 / NCTC 11817 / S12).